We begin with the raw amino-acid sequence, 132 residues long: Small ribosomal subunit protein uS8 (132 aa).

It belongs to the universal ribosomal protein uS8 family. In terms of assembly, part of the 30S ribosomal subunit. Contacts proteins S5 and S12.

Its function is as follows. One of the primary rRNA binding proteins, it binds directly to 16S rRNA central domain where it helps coordinate assembly of the platform of the 30S subunit. The polypeptide is Small ribosomal subunit protein uS8 (Gluconacetobacter diazotrophicus (strain ATCC 49037 / DSM 5601 / CCUG 37298 / CIP 103539 / LMG 7603 / PAl5)).